A 368-amino-acid chain; its full sequence is Probable multidrug ABC transporter permease YbhR (368 aa).

The Cytoplasmic portion of the chain corresponds to 1 to 24 (MFHRLWTLIRKELQSLLREPQTRA). A helical membrane pass occupies residues 25–45 (ILILPVLIQVILFPFAATLEV). Residues 46–173 (TNATIAIYDE…WYNPNLDYKW (128 aa)) are Periplasmic-facing. In terms of domain architecture, ABC transmembrane type-2 spans 129–366 (AQIAANYLQQ…SAAYAMFRRK (238 aa)). The helical transmembrane segment at 174 to 194 (FVVPSLIAMITTIGVMIVTSL) threads the bilayer. Over 195–222 (SVAREREQGTLDQLLVSPLTTWQIFIGK) the chain is Cytoplasmic. Residues 223–243 (AVPALIVATFQATIVLAIGIW) traverse the membrane as a helical segment. Residues 244–253 (AYQIPFAGSL) are Periplasmic-facing. A helical transmembrane segment spans residues 254–274 (ALFYFTMVIYGLSLVGFGLLI). The Cytoplasmic segment spans residues 275–284 (SSLCSTQQQA). The helical transmembrane segment at 285–305 (FIGVFVFMMPAILLSGYVSPV) threads the bilayer. Residues 306–339 (ENMPVWLQNLTWINPIRHFTDITKQIYLKDASLD) are Periplasmic-facing. A helical membrane pass occupies residues 340-360 (IVWNSLWPLLVITATTGSAAY). Residues 361–368 (AMFRRKVM) are Cytoplasmic-facing.

The protein belongs to the ABC-2 integral membrane protein family. In terms of assembly, the complex is probably composed of two ATP-binding proteins (YbhF) and two transmembrane proteins (YbhR and YbhS).

The protein localises to the cell inner membrane. Its function is as follows. Part of the ABC transporter complex YbhFSR that could be involved in efflux of cefoperazone. Probably involved in the translocation of the substrate across the membrane. The chain is Probable multidrug ABC transporter permease YbhR (ybhR) from Escherichia coli O157:H7.